We begin with the raw amino-acid sequence, 65 residues long: UPF0434 protein bsr0601 (65 aa).

It belongs to the UPF0434 family.

This Bradyrhizobium diazoefficiens (strain JCM 10833 / BCRC 13528 / IAM 13628 / NBRC 14792 / USDA 110) protein is UPF0434 protein bsr0601.